The following is a 258-amino-acid chain: Flap endonuclease Xni (258 aa).

Position 109 (Asp-109) interacts with Mg(2+). The 90-residue stretch at 165–254 (VKPEQLPDYW…GFNLQDIRYL (90 aa)) folds into the 5'-3' exonuclease domain. Residues Leu-176, Ala-177, Pro-185, Ile-187, and Ile-190 each contribute to the K(+) site. Residues 189–194 (GIGPKA) form an interaction with DNA region.

This sequence belongs to the Xni family. Requires Mg(2+) as cofactor. It depends on K(+) as a cofactor.

In terms of biological role, has flap endonuclease activity. During DNA replication, flap endonucleases cleave the 5'-overhanging flap structure that is generated by displacement synthesis when DNA polymerase encounters the 5'-end of a downstream Okazaki fragment. This Photobacterium profundum (strain SS9) protein is Flap endonuclease Xni.